The following is a 134-amino-acid chain: Small ribosomal subunit protein uS8 (134 aa).

The protein belongs to the universal ribosomal protein uS8 family. In terms of assembly, part of the 30S ribosomal subunit. Contacts proteins S5 and S12.

Functionally, one of the primary rRNA binding proteins, it binds directly to 16S rRNA central domain where it helps coordinate assembly of the platform of the 30S subunit. The sequence is that of Small ribosomal subunit protein uS8 from Thermosipho africanus (strain TCF52B).